The primary structure comprises 631 residues: Guanylate-binding protein 4 (631 aa).

The GB1/RHD3-type G domain occupies 33–283 (SQPVVVVAIV…FASYIFTYAK (251 aa)). Residues 43 to 50 (GWSHTGKS) and 103 to 107 (DTEGL) contribute to the GTP site. Residues 492-592 (IAEKHTKKEA…GHNIKEMKQN (101 aa)) adopt a coiled-coil conformation.

Belongs to the TRAFAC class dynamin-like GTPase superfamily. GB1/RHD3 GTPase family. GB1 subfamily. In terms of assembly, heterodimer with other family members, including GBP1, GBP2 and GBP5. Dimerization regulates subcellular location. Interacts with IRF7; preventing interaction between TRAF6 and IRF7, resulting in impaired TRAF6-mediated IRF7 ubiquitination. Mainly expressed in organs of the immune system, such as spleen and lymph nodes.

It localises to the golgi apparatus membrane. The protein resides in the cytoplasm. It is found in the nucleus. The protein localises to the perinuclear region. It carries out the reaction GTP + H2O = GDP + phosphate + H(+). Its function is as follows. Interferon (IFN)-inducible GTPase that plays important roles in innate immunity against a diverse range of bacterial, viral and protozoan pathogens. Negatively regulates the antiviral response by inhibiting activation of IRF7 transcription factor. In Mus musculus (Mouse), this protein is Guanylate-binding protein 4.